The chain runs to 262 residues: MIDKSAFVHPTAIVEEGASIGANAHIGPFCIVGPHVGIGEGTVLKSHVVVNGHTKIGRDNEIYQFASIGEVNQDLKYAGEPTRVEIGDRNRIRESVTIHRGTVQGGGLTKVGSDNLLMINAHIAHDCTVGNRCILANNATLAGHVSVDDFAIIGGMTAVHQFCIIGAHVMVGGCSGVAQDVPPYVIAQGNHATPFGVNIEGLKRRGFSREAITAIRNAYKLIYRSGKTLDEVKPEIAELAETYPEVKAFTDFFSRSTRGLIR.

The protein belongs to the transferase hexapeptide repeat family. LpxA subfamily. As to quaternary structure, homotrimer.

The protein localises to the cytoplasm. It carries out the reaction a (3R)-hydroxyacyl-[ACP] + UDP-N-acetyl-alpha-D-glucosamine = a UDP-3-O-[(3R)-3-hydroxyacyl]-N-acetyl-alpha-D-glucosamine + holo-[ACP]. The protein operates within glycolipid biosynthesis; lipid IV(A) biosynthesis; lipid IV(A) from (3R)-3-hydroxytetradecanoyl-[acyl-carrier-protein] and UDP-N-acetyl-alpha-D-glucosamine: step 1/6. Functionally, involved in the biosynthesis of lipid A, a phosphorylated glycolipid that anchors the lipopolysaccharide to the outer membrane of the cell. This chain is Acyl-[acyl-carrier-protein]--UDP-N-acetylglucosamine O-acyltransferase, found in Shigella boydii serotype 18 (strain CDC 3083-94 / BS512).